The primary structure comprises 405 residues: Formate-dependent phosphoribosylglycinamide formyltransferase (405 aa).

Residues 22–23 and Glu82 contribute to the N(1)-(5-phospho-beta-D-ribosyl)glycinamide site; that span reads EL. ATP is bound by residues Arg115, Lys162, 167 to 172, 202 to 205, and Glu210; these read SSGKGQ and EGFI. The ATP-grasp domain maps to 120-320; the sequence is RLAAETLGLA…EFELHARAIL (201 aa). The Mg(2+) site is built by Glu279 and Glu291. N(1)-(5-phospho-beta-D-ribosyl)glycinamide contacts are provided by residues Asp298, Lys367, and 374–375; that span reads RR.

The protein belongs to the PurK/PurT family. As to quaternary structure, homodimer.

It carries out the reaction N(1)-(5-phospho-beta-D-ribosyl)glycinamide + formate + ATP = N(2)-formyl-N(1)-(5-phospho-beta-D-ribosyl)glycinamide + ADP + phosphate + H(+). The protein operates within purine metabolism; IMP biosynthesis via de novo pathway; N(2)-formyl-N(1)-(5-phospho-D-ribosyl)glycinamide from N(1)-(5-phospho-D-ribosyl)glycinamide (formate route): step 1/1. Functionally, involved in the de novo purine biosynthesis. Catalyzes the transfer of formate to 5-phospho-ribosyl-glycinamide (GAR), producing 5-phospho-ribosyl-N-formylglycinamide (FGAR). Formate is provided by PurU via hydrolysis of 10-formyl-tetrahydrofolate. The sequence is that of Formate-dependent phosphoribosylglycinamide formyltransferase from Delftia acidovorans (strain DSM 14801 / SPH-1).